A 392-amino-acid polypeptide reads, in one-letter code: THO complex subunit MFT1 (392 aa).

2 stretches are compositionally biased toward acidic residues: residues 258–271 (DNIDEDYESDEDEE) and 290–330 (NVDE…EVDG). The segment at 258–392 (DNIDEDYESD…SASSSVEEVK (135 aa)) is disordered. The residue at position 266 (serine 266) is a Phosphoserine. Over residues 331–344 (ESSQQEDNSRQGNN) the composition is skewed to polar residues. Positions 345–367 (EETDKETGVIEEPDAVNDAEEAD) are enriched in acidic residues. Over residues 377 to 392 (GTTSDFSASSSVEEVK) the composition is skewed to polar residues.

Component of the THO complex, which is composed of HPR1, MFT1, THO2 and THP2. Together with SUB2, TEX1 and YRA1, THO forms the transcription/export (TREX) complex. THO associates with DNA and RNA in vitro.

Its subcellular location is the nucleus. In terms of biological role, component the THO subcomplex of the TREX complex, which operates in coupling transcription elongation to mRNA export. The THO complex is recruited to transcribed genes and moves along the gene with the elongating polymerase during transcription. THO is important for stabilizing nascent RNA in the RNA polymerase II elongation complex by preventing formation of DNA:RNA hybrids behind the elongating polymerase. It functions in cotranscriptional formation of an export-competent messenger ribonucleoprotein particle (mRNP) by facilitating the loading of ATP-dependent RNA helicase SUB2 and the mRNA export factor YRA1 along the nascent mRNA. The protein is THO complex subunit MFT1 (MFT1) of Saccharomyces cerevisiae (strain ATCC 204508 / S288c) (Baker's yeast).